The primary structure comprises 285 residues: Flagellar filament core protein flaB2 (285 aa).

The protein belongs to the bacterial flagellin family. In terms of assembly, the flagellum consists of an outer layer composed of two sheath proteins, flaA1 (44 kDa) and flaA2 (35 kDa) around a core that contains three proteins flaB1 (37 kDa), flaB2 (34 kDa) and flaB3 (32 kDa).

The protein localises to the periplasmic flagellum. It is found in the periplasm. Component of the core of the flagella. The protein is Flagellar filament core protein flaB2 (flaB2) of Brachyspira hyodysenteriae (Treponema hyodysenteriae).